Consider the following 445-residue polypeptide: Tubulin beta-2 chain (445 aa).

Gln-12, Glu-73, Ser-142, Gly-146, Thr-147, Gly-148, Asn-208, and Asn-230 together coordinate GTP. Glu-73 lines the Mg(2+) pocket.

Belongs to the tubulin family. Dimer of alpha and beta chains. A typical microtubule is a hollow water-filled tube with an outer diameter of 25 nm and an inner diameter of 15 nM. Alpha-beta heterodimers associate head-to-tail to form protofilaments running lengthwise along the microtubule wall with the beta-tubulin subunit facing the microtubule plus end conferring a structural polarity. Microtubules usually have 13 protofilaments but different protofilament numbers can be found in some organisms and specialized cells. Mg(2+) serves as cofactor.

The protein localises to the cytoplasm. It is found in the cytoskeleton. Tubulin is the major constituent of microtubules, a cylinder consisting of laterally associated linear protofilaments composed of alpha- and beta-tubulin heterodimers. Microtubules grow by the addition of GTP-tubulin dimers to the microtubule end, where a stabilizing cap forms. Below the cap, tubulin dimers are in GDP-bound state, owing to GTPase activity of alpha-tubulin. The protein is Tubulin beta-2 chain (TUBB2) of Suillus bovinus (Jersey cow bolete).